A 423-amino-acid polypeptide reads, in one-letter code: Glycine amidinotransferase, mitochondrial (423 aa).

Residues 1-43 constitute a mitochondrion transit peptide; sequence MLRVRCLRGGSRGAEALHYIGSRLGRTVTGWVQRTFQSTQAAT. 2 positions are modified to phosphoserine: Ser46 and Ser49. Position 170 (Asp170) interacts with arginine. Catalysis depends on residues Asp254 and His303. Asp305, Arg322, Ser354, and Ser355 together coordinate arginine. The residue at position 385 (Lys385) is an N6-acetyllysine. The Amidino-cysteine intermediate role is filled by Cys407.

It belongs to the amidinotransferase family. As to quaternary structure, homodimer. In terms of tissue distribution, kidney. Expressed biallelically in placenta.

It is found in the mitochondrion inner membrane. The enzyme catalyses L-arginine + glycine = guanidinoacetate + L-ornithine. It catalyses the reaction 4-aminobutanoate + L-arginine = 4-guanidinobutanoate + L-ornithine. The catalysed reaction is beta-alanine + L-arginine = 3-guanidinopropanoate + L-ornithine. It carries out the reaction taurine + L-arginine = taurocyamine + L-ornithine. It functions in the pathway amine and polyamine biosynthesis; creatine biosynthesis; creatine from L-arginine and glycine: step 1/2. Transamidinase that catalyzes the transfer of the amidino group of L-arginine onto the amino moiety of acceptor metabolites such as glycine, beta-alanine, gamma-aminobutyric acid (GABA) and taurine yielding the corresponding guanidine derivatives. Catalyzes the rate-limiting step of creatine biosynthesis, namely the transfer of the amidino group from L-arginine to glycine to generate guanidinoacetate, which is then methylated by GAMT to form creatine. Provides creatine as a source for ATP generation in tissues with high energy demands, in particular skeletal muscle, heart and brain. This Sus scrofa (Pig) protein is Glycine amidinotransferase, mitochondrial (GATM).